An 856-amino-acid polypeptide reads, in one-letter code: Beta-galactosidase 3 (856 aa).

The signal sequence occupies residues Met-1 to Cys-31. Residue Glu-189 is the Proton donor of the active site. The Nucleophile role is filled by Glu-258. An N-linked (GlcNAc...) asparagine glycan is attached at Asn-468. Residues Thr-760 to Ala-846 form the SUEL-type lectin domain.

The protein belongs to the glycosyl hydrolase 35 family. As to expression, ubiquitous.

The protein resides in the secreted. The protein localises to the extracellular space. It is found in the apoplast. It carries out the reaction Hydrolysis of terminal non-reducing beta-D-galactose residues in beta-D-galactosides.. This Arabidopsis thaliana (Mouse-ear cress) protein is Beta-galactosidase 3 (BGAL3).